A 769-amino-acid chain; its full sequence is Integrin beta-8 (769 aa).

The signal sequence occupies residues 1 to 42; sequence MCGSALAFFTAAFVCLQNDRRGPASFLWAAWVFSLVLGLGQG. The Extracellular portion of the chain corresponds to 43-684; that stretch reads EDNRCASSNA…ECFSSPSYLR (642 aa). Positions 46 to 95 constitute a PSI domain; it reads RCASSNAASCARCLALGPECGWCVQEDFISGGSRSERCDIVSNLISKGCS. Intrachain disulfides connect Cys-47-Cys-65, Cys-55-Cys-469, Cys-58-Cys-83, Cys-68-Cys-94, Cys-211-Cys-218, Cys-266-Cys-307, Cys-407-Cys-419, Cys-439-Cys-467, Cys-471-Cys-491, Cys-471-Cys-494, Cys-481-Cys-494, Cys-499-Cys-528, Cys-511-Cys-526, Cys-520-Cys-531, Cys-533-Cys-546, Cys-553-Cys-567, Cys-561-Cys-572, Cys-574-Cys-583, Cys-585-Cys-609, Cys-593-Cys-607, Cys-601-Cys-612, Cys-614-Cys-624, Cys-627-Cys-630, Cys-634-Cys-661, and Cys-640-Cys-657. Residues 146–384 enclose the VWFA domain; that stretch reads PVDLYYLVDV…NLVVEAYQKL (239 aa). Mg(2+) is bound by residues Asp-154 and Ser-156. Asp-193 lines the Ca(2+) pocket. An N-linked (GlcNAc...) asparagine glycan is attached at Asn-233. The Ca(2+) site is built by Asn-249, Asp-251, Pro-253, and Glu-254. Glu-254 lines the Mg(2+) pocket. N-linked (GlcNAc...) asparagine glycosylation occurs at Asn-402. 4 N-linked (GlcNAc...) asparagine glycosylation sites follow: Asn-421, Asn-431, Asn-456, and Asn-466. I-EGF domains are found at residues 471-495, 499-547, 548-584, and 585-625; these read CEDNRGPKGKCVDETFLDSKCFQCD, CHFD…KYCE, KDDFSCPYHHGNLCAGHGECEAGRCQCFSGWEGDRCQ, and CPSA…RFCE. The N-linked (GlcNAc...) asparagine glycan is linked to Asn-648. A helical transmembrane segment spans residues 685–704; it reads IFFIIFIVTFLIGLLKVLII. The Cytoplasmic portion of the chain corresponds to 705–769; the sequence is RQVILQWNSN…NAHETFRCNF (65 aa).

The protein belongs to the integrin beta chain family. As to quaternary structure, heterodimer of an alpha and a beta subunit. Beta-8 (ITGB8) associates with alpha-V (ITGAV) to form ITGAV:ITGB8. ITGAV:ITGB8 interacts with TGFB1. As to expression, placenta, kidney, brain, ovary, uterus and in several transformed cells. Transiently expressed in 293 human embryonic kidney cells.

It is found in the cell membrane. In terms of biological role, integrin alpha-V:beta-8 (ITGAV:ITGB8) is a receptor for fibronectin. It recognizes the sequence R-G-D in its ligands. Integrin alpha-V:beta-6 (ITGAV:ITGB6) mediates R-G-D-dependent release of transforming growth factor beta-1 (TGF-beta-1) from regulatory Latency-associated peptide (LAP), thereby playing a key role in TGF-beta-1 activation on the surface of activated regulatory T-cells (Tregs). Required during vasculogenesis. This is Integrin beta-8 from Homo sapiens (Human).